Here is a 271-residue protein sequence, read N- to C-terminus: tRNA pseudouridine synthase A (271 aa).

Catalysis depends on Asp-54, which acts as the Nucleophile. Tyr-112 lines the substrate pocket.

This sequence belongs to the tRNA pseudouridine synthase TruA family. As to quaternary structure, homodimer.

The enzyme catalyses uridine(38/39/40) in tRNA = pseudouridine(38/39/40) in tRNA. Formation of pseudouridine at positions 38, 39 and 40 in the anticodon stem and loop of transfer RNAs. The sequence is that of tRNA pseudouridine synthase A from Acinetobacter baylyi (strain ATCC 33305 / BD413 / ADP1).